Consider the following 360-residue polypeptide: MWIDLLARERSDKMSEGEGQAKNRLFLGIDLGTSHTAVMTSRGKKFLLKSVVGYPKDVIGLKLLGRPYVVGDEAFEMRSYLDLRYPLQDGVLSEISDRDIEVARHLLTHVVKSAEPGANDEICAVIGVPARASGANKALLLKMAQEVVHTALVVSEPFMVGYGLDKLNNTIIVDIGAGTTDICALKGTVPGPEDQVTLTKAGNYLDERLQNAILERHPELQMNTNVACAVKEQFSFVGARGEAATFEFRAAGKPVRCDVTESVKIACEALMPDIIESIEILLRSFQPEYQATVLQNIVFAGGGSRIRGLAAYVKDKLRPFGNADVTCVKDPTFDGCRGALRLAEELPPQYWCQLGDVSGQ.

ATP is bound by residues Lys22, 33–34 (TS), and Asp89. Mg(2+) is bound at residue Glu156. ATP contacts are provided by residues 177-179 (AGT), 231-235 (KEQFS), and Gly302.

It belongs to the FtsA/MreB family. MamK subfamily. In terms of assembly, forms cytoplasmic filaments. Interacts with MamJ. Forms filaments in the absence of other magnetosome proteins and in E.coli. Filament formation in vitro requires ATP, GTP or a non-hydrolyzable ATP analog.

Its subcellular location is the cytoplasm. The protein resides in the cytoskeleton. It carries out the reaction ATP + H2O = ADP + phosphate + H(+). Its activity is regulated as follows. Filament dynamics depend partially on MamJ. Its function is as follows. Protein with ATPase activity which forms dynamic cytoplasmic filaments that are involved in sorting, concatenating and/or correctly positioning of magnetosomes in the cell. Not absolutely necessary for assembly of short chains. Filaments grow from the both cell poles towards midcell, and are probably disassembled at the other end of the cell, a process known as treadmilling. Polymerizes in the presence of ATP, GTP or a non-hydrolyzable ATP analog. Required for correct segregation and positioning of magnetosomes following cell division. In Magnetospirillum gryphiswaldense (strain DSM 6361 / JCM 21280 / NBRC 15271 / MSR-1), this protein is Actin-like protein MamK.